A 355-amino-acid chain; its full sequence is MNELKNDRYLRALLRQPVDMTPVWMMRQAGRYLPEYKATRAIAGDFMSLCKNAELACEVTMQPLRRYPLDAAILFSDILTIPDAMGLGLYFETGEGPRFQSPITCRADVEKLPIPDPEQELGYVMNAVRTIRRELAGSVPLIGFSGSPWTLATYMVEGGSSKAFTKLKKMMYAEPQTLHLLLDKLADSVILYLNAQIKAGAQSVMIFDTWGGVLTGRDYHEFSLNYMHKIVDGLIRENEGRRVPVTLFTKGGGQWLEAMAATGCDALGLDWTTDIADARRRVGDKVALQGNMDPSVLYAPPARIEQEVSTILASFGQGEGHVFNLGHGIHQDVPPAHAGAFVNAVHALSRPYHQK.

Substrate is bound by residues 27–31 (RQAGR), Asp-77, Tyr-154, Thr-209, and His-327.

It belongs to the uroporphyrinogen decarboxylase family. In terms of assembly, homodimer.

The protein resides in the cytoplasm. The enzyme catalyses uroporphyrinogen III + 4 H(+) = coproporphyrinogen III + 4 CO2. The protein operates within porphyrin-containing compound metabolism; protoporphyrin-IX biosynthesis; coproporphyrinogen-III from 5-aminolevulinate: step 4/4. Its function is as follows. Catalyzes the decarboxylation of four acetate groups of uroporphyrinogen-III to yield coproporphyrinogen-III. This Yersinia pseudotuberculosis serotype O:1b (strain IP 31758) protein is Uroporphyrinogen decarboxylase.